A 178-amino-acid polypeptide reads, in one-letter code: Caveolin-1 (178 aa).

An N-acetylserine modification is found at S2. Phosphoserine is present on S2. The segment at 2–94 (SGGKYVDSEG…WKASFTTFTV (93 aa)) is required for homooligomerization. Over 2–104 (SGGKYVDSEG…TKYWFYRLLS (103 aa)) the chain is Cytoplasmic. Residue K5 is modified to N6-acetyllysine; alternate. A Glycyl lysine isopeptide (Lys-Gly) (interchain with G-Cter in ubiquitin); alternate cross-link involves residue K5. Y6 bears the Phosphotyrosine mark. S9 bears the Phosphoserine mark. Phosphotyrosine; by ABL1 is present on Y14. Residue Y25 is modified to Phosphotyrosine. Residues K26, K30, K39, K47, and K57 each participate in a glycyl lysine isopeptide (Lys-Gly) (interchain with G-Cter in ubiquitin) cross-link. Residues 82-94 (DGIWKASFTTFTV) form an interaction with CAVIN3 region. An intramembrane region (helical) is located at residues 105–125 (ALFGIPMALIWGIYFAILSFL). Residues 126–178 (HIWAVVPCIKSFLIEIQCISRVYSIYVHTFCDPFFEAVGKIFSNIRINMQKEI) lie on the Cytoplasmic side of the membrane. The interval 131–142 (VPCIKSFLIEIQ) is interacts with SPRY1, SPRY2, SPRY3 and SPRY4. S-palmitoyl cysteine attachment occurs at residues C133, C143, and C156. Residues 149–160 (SIYVHTFCDPFF) form an interacts with SPRY1, SPRY2, and SPRY4 region. Residues 167–178 (FSNIRINMQKEI) are interacts with SPRY1, SPRY2, SPRY3 and SPRY4.

It belongs to the caveolin family. As to quaternary structure, homooligomer. Interacts with GLIPR2. Interacts with NOSTRIN. Interacts with SNAP25 and STX1A. Interacts (via the N-terminus) with DPP4; the interaction is direct. Interacts with CTNNB1, CDH1 and JUP. Interacts with PACSIN2; this interaction induces membrane tubulation. Interacts with SLC7A9. Interacts with BMX and BTK. Interacts with TGFBR1. Interacts with CAVIN3 (via leucine-zipper domain) in a cholesterol-sensitive manner. Interacts with CAVIN1. Interacts with EHD2 in a cholesterol-dependent manner. Forms a ternary complex with UBXN6 and VCP; mediates CAV1 targeting to lysosomes for degradation. Interacts with ABCG1; this interaction regulates ABCG1-mediated cholesterol efflux. Interacts with NEU3; this interaction enhances NEU3 sialidase activity within caveola. Interacts (via C-terminus) with SPRY1, SPRY2 (via C-terminus), SPRY3, and SPRY4. Interacts with IGFBP5; this interaction allows trafficking of IGFBP5 from the plasma membrane to the nucleus. Post-translationally, phosphorylated at Tyr-14 by ABL1 in response to oxidative stress. Ubiquitinated. Undergo monoubiquitination and multi- and/or polyubiquitination. Monoubiquitination of N-terminal lysines promotes integration in a ternary complex with UBXN6 and VCP which promotes oligomeric CAV1 targeting to lysosomes for degradation. Ubiquitinated by ZNRF1; leading to degradation and modulation of the TLR4-mediated immune response.

The protein resides in the golgi apparatus membrane. The protein localises to the cell membrane. Its subcellular location is the membrane. It is found in the caveola. It localises to the membrane raft. Functionally, may act as a scaffolding protein within caveolar membranes. Forms a stable heterooligomeric complex with CAV2 that targets to lipid rafts and drives caveolae formation. Mediates the recruitment of CAVIN proteins (CAVIN1/2/3/4) to the caveolae. Interacts directly with G-protein alpha subunits and can functionally regulate their activity. Involved in the costimulatory signal essential for T-cell receptor (TCR)-mediated T-cell activation. Its binding to DPP4 induces T-cell proliferation and NF-kappa-B activation in a T-cell receptor/CD3-dependent manner. Recruits CTNNB1 to caveolar membranes and may regulate CTNNB1-mediated signaling through the Wnt pathway. Negatively regulates TGFB1-mediated activation of SMAD2/3 by mediating the internalization of TGFBR1 from membrane rafts leading to its subsequent degradation. Binds 20(S)-hydroxycholesterol (20(S)-OHC). The protein is Caveolin-1 (CAV1) of Felis catus (Cat).